We begin with the raw amino-acid sequence, 1120 residues long: Elongation factor-like GTPase 1 (1120 aa).

Residues 17-272 (ANIRNICVLA…LMKTLWGDYY (256 aa)) form the tr-type G domain. Residues 26–33 (AHVDHGKT), 92–96 (DSPGH), and 146–149 (NKID) each bind GTP. Residues 430–496 (PRPLTQEEIA…VESMTPKPVL (67 aa)) are disordered. Basic and acidic residues-rich tracts occupy residues 438–452 (IAQR…HAEK) and 475–484 (PKGEEPRGDE). The residue at position 528 (K528) is an N6-acetyllysine. Residues 907–930 (ASDLAKEGQEENETCSGGNENQEL) form a disordered region. The span at 920–930 (TCSGGNENQEL) shows a compositional bias: polar residues.

It belongs to the TRAFAC class translation factor GTPase superfamily. Classic translation factor GTPase family. As to quaternary structure, associates with the 60S ribosomal subunit. Found in a complex consisting of the 60S ribosomal subunit, SBDS and EFL1. Interacts with SBDS and binds to GTP and GDP; the interaction with SBDS decreases EFL1 affinity for GDP and facilitates GDP release. Expressed at low levels in brain. Expression is highly increased in glioma tissues.

It catalyses the reaction GTP + H2O = GDP + phosphate + H(+). Its activity is regulated as follows. GTPase activity is stimulated in the presence of 60S ribosome subunits. Functionally, GTPase involved in the biogenesis of the 60S ribosomal subunit and translational activation of ribosomes. Together with SBDS, triggers the GTP-dependent release of EIF6 from 60S pre-ribosomes in the cytoplasm, thereby activating ribosomes for translation competence by allowing 80S ribosome assembly and facilitating EIF6 recycling to the nucleus, where it is required for 60S rRNA processing and nuclear export. This Homo sapiens (Human) protein is Elongation factor-like GTPase 1.